The sequence spans 465 residues: RuvB-like helicase 2 (465 aa).

73–80 (GEPSTGKT) contacts ATP.

This sequence belongs to the RuvB family. In terms of assembly, forms homohexameric rings. May form a dodecamer with pont made of two stacked hexameric rings. Component of the chromatin remodeling Ino80 complex.

The protein resides in the nucleus. It catalyses the reaction ATP + H2O = ADP + phosphate + H(+). In terms of biological role, acts as a transcriptional coactivator in Wg signaling. Its function is as follows. Proposed core component of the chromatin remodeling Ino80 complex which is involved in transcriptional regulation, DNA replication and probably DNA repair. This is RuvB-like helicase 2 from Aedes aegypti (Yellowfever mosquito).